The chain runs to 717 residues: ATP-dependent zinc metalloprotease FtsH (717 aa).

The Cytoplasmic segment spans residues 1 to 9 (MKNASRIFK). A helical transmembrane segment spans residues 10 to 30 (GPLIWILLCIGLIIVFLQFAG). Residues 31-111 (SGNGYKDIPT…SWQGENPGQS (81 aa)) lie on the Extracellular side of the membrane. The helical transmembrane segment at 112–132 (IWKALLINFLPFVIILLFFLW) threads the bilayer. Topologically, residues 133–717 (AMNAAQGMGG…NGNPWGPPRS (585 aa)) are cytoplasmic. 207-214 (GPPGTGKT) is an ATP binding site. Residue His-429 participates in Zn(2+) binding. Glu-430 is an active-site residue. The Zn(2+) site is built by His-433 and Asp-505. The interval 617-717 (AFTGSDKRVP…NGNPWGPPRS (101 aa)) is disordered. The span at 691 to 717 (PEPPSPTHPGEGPQPPSNGNPWGPPRS) shows a compositional bias: pro residues.

The protein in the central section; belongs to the AAA ATPase family. This sequence in the C-terminal section; belongs to the peptidase M41 family. As to quaternary structure, homohexamer. The cofactor is Zn(2+).

Its subcellular location is the cell membrane. Acts as a processive, ATP-dependent zinc metallopeptidase for both cytoplasmic and membrane proteins. Plays a role in the quality control of integral membrane proteins. This chain is ATP-dependent zinc metalloprotease FtsH, found in Cutibacterium acnes (strain SK137) (Propionibacterium acnes).